The chain runs to 58 residues: UPF0391 membrane protein Shew185_1413 (58 aa).

A run of 2 helical transmembrane segments spans residues 6–26 and 28–48; these read LVFL…IAGA and AGIA…SLLI.

The protein belongs to the UPF0391 family.

The protein localises to the cell membrane. This chain is UPF0391 membrane protein Shew185_1413, found in Shewanella baltica (strain OS185).